The chain runs to 591 residues: Paxillin (591 aa).

An N-acetylmethionine modification is found at Met-1. Residues 3–15 (DLDALLADLESTT) carry the LD motif 1 motif. The disordered stretch occupies residues 17-138 (HISKRPVFLS…SSPTVMSTSL (122 aa)). Position 31 is a phosphotyrosine; by PTK6 (Tyr-31). The span at 45-54 (VPPPVPPPPS) shows a compositional bias: pro residues. Positions 69–101 (WQPSGSRFIHQQPQSSSPVYGSSAKTSSVSNPQ) are enriched in polar residues. Phosphoserine occurs at positions 83 and 85. Tyr-88 carries the phosphotyrosine modification. Residue Ser-106 is modified to Phosphoserine. Tyr-118 bears the Phosphotyrosine; by PTK6 mark. A phosphoserine mark is found at Ser-119, Ser-126, and Ser-130. The segment covering 121-137 (PNKQKSAESSPTVMSTS) has biased composition (polar residues). Thr-132 carries the post-translational modification Phosphothreonine. Phosphoserine is present on residues Ser-137, Ser-140, and Ser-143. The LD motif 2 motif lies at 144–156 (ELDRLLLELNAVQ). Residues 156 to 213 (QHNPPGFPADEANSGPPLPGALSPHYGVPETNSPLGGKAGPLTKEKPKRNGGRGLEDV) form a disordered region. Tyr-181 is subject to Phosphotyrosine. An LD motif 3 motif is present at residues 216-228 (SVESLLDELESSV). Ser-230 carries the phosphoserine modification. The interval 237–260 (VNQGEMSSPQRVTSTQQQTRISAS) is disordered. Position 244 is a phosphoserine; by CDK5 (Ser-244). Phosphoserine occurs at positions 250, 258, 261, and 272. Positions 265 to 276 (ELDELMASLSDF) match the LD motif 4 motif. A compositionally biased stretch (basic and acidic residues) spans 289–300 (RCWAADWPRDGG). The tract at residues 289–335 (RCWAADWPRDGGRSSPGGQDEGGFMAQGKTGSSSPPGGPPKPGSQLD) is disordered. A phosphoserine mark is found at Ser-303, Ser-322, Ser-332, and Ser-340. The LD motif 5 motif lies at 333–345 (QLDSMLGSLQSDL). LIM zinc-binding domains lie at 356 to 415 (GVCG…LFSP), 416 to 473 (RCYY…DMFA), 474 to 533 (PKCG…RRGS), and 534 to 591 (LCSG…KLFC). The residue at position 533 (Ser-533) is a Phosphoserine.

It belongs to the paxillin family. In terms of assembly, binds to vinculin and to the SH3 domain of SRC. Interacts with GIT1, NUDT16L1/SDOS, PARVA, PARVB, SORBS1 and TGFB1I1. Component of cytoplasmic complexes, which also contain GIT1, ARHGEF6 and PAK1. Binds ASAP2. Interacts with RNF5 and PDCD10. Interacts with NEK3 and this interaction is prolactin-dependent. Interacts with PTK2/FAK1 and PTK2B/PYK2. Interacts with PTK6. Interacts with CD36. Interacts (via cytoplasmic domain) with CEACAM1; the interaction is phosphotyrosyl-dependent. Interacts with PXN; this complex stabilizes actin dynamics. Interacts with TRIM15. Interacts with PAK4; PAK4 acts as a scaffold to suppport PAXI phosphorylation at Ser-272. Phosphorylated by MAPK1/ERK2. Phosphorylated on tyrosine residues during integrin-mediated cell adhesion, embryonic development, fibroblast transformation and following stimulation of cells by mitogens. Phosphorylation at Ser-244 by CDK5 reduces its interaction with PTK2/FAK1 in matrix-cell focal adhesions (MCFA) during oligodendrocytes (OLs) differentiation. Phosphorylation at Tyr-31 and Tyr-118 by PTK6 promote the activation of RAC1 via CRK/CrKII, thereby promoting migration and invasion. Phosphorylation at Ser-250 by SLK is required for PXN redistribution and cell motility. Phosphorylation at Ser-272 promotes focal adhesion disassembly during cell migration.

The protein resides in the cytoplasm. The protein localises to the cytoskeleton. It is found in the cell junction. It localises to the focal adhesion. Its subcellular location is the cell cortex. Functionally, cytoskeletal protein involved in actin-membrane attachment at sites of cell adhesion to the extracellular matrix (focal adhesion). Recruits other proteins such as TRIM15 to focal adhesion. This is Paxillin (PXN) from Pongo abelii (Sumatran orangutan).